Here is a 72-residue protein sequence, read N- to C-terminus: Gas vesicle protein A (72 aa).

Belongs to the gas vesicle GvpA family. The gas vesicle shell is 2 nm thick and consists of a single layer of this protein. It forms helical ribs nearly perpendicular to the long axis of the vesicle.

It localises to the gas vesicle shell. Gas vesicles are hollow, gas filled proteinaceous nanostructures found in some microorganisms. During planktonic growth they allow positioning of the organism at a favorable depth for light or nutrient acquisition. GvpA forms the protein shell. This Pseudanabaena galeata (strain PCC 6901) protein is Gas vesicle protein A.